The sequence spans 277 residues: NLP effector protein Pc109095 (277 aa).

Residues 1–19 (MKFIFAFVLCLAVAQTALG) form the signal peptide. Positions 119-125 (RSRHLWA) match the Hepta-peptide GHRHDWE motif motif. A glycan (N-linked (GlcNAc...) asparagine) is linked at N199.

The protein belongs to the Necrosis inducing protein (NPP1) family.

It localises to the secreted. Its function is as follows. Secreted effector that contributes strongly to virulence during infection by P.capsici. The polypeptide is NLP effector protein Pc109095 (Phytophthora capsici).